The chain runs to 327 residues: Undecaprenyl-phosphate 4-deoxy-4-formamido-L-arabinose transferase (327 aa).

The next 2 membrane-spanning stretches (helical) occupy residues 236-256 and 270-290; these read LSIFGSVIALLGFAFGLLLVV and VFMLFAVLFMFIGAQFIGMGL.

It belongs to the glycosyltransferase 2 family.

The protein localises to the cell inner membrane. The enzyme catalyses UDP-4-deoxy-4-formamido-beta-L-arabinose + di-trans,octa-cis-undecaprenyl phosphate = 4-deoxy-4-formamido-alpha-L-arabinopyranosyl di-trans,octa-cis-undecaprenyl phosphate + UDP. It functions in the pathway glycolipid biosynthesis; 4-amino-4-deoxy-alpha-L-arabinose undecaprenyl phosphate biosynthesis; 4-amino-4-deoxy-alpha-L-arabinose undecaprenyl phosphate from UDP-4-deoxy-4-formamido-beta-L-arabinose and undecaprenyl phosphate: step 1/2. The protein operates within bacterial outer membrane biogenesis; lipopolysaccharide biosynthesis. Catalyzes the transfer of 4-deoxy-4-formamido-L-arabinose from UDP to undecaprenyl phosphate. The modified arabinose is attached to lipid A and is required for resistance to polymyxin and cationic antimicrobial peptides. The sequence is that of Undecaprenyl-phosphate 4-deoxy-4-formamido-L-arabinose transferase from Klebsiella pneumoniae (strain 342).